Reading from the N-terminus, the 71-residue chain is uncharacterized protein (71 aa).

This is an uncharacterized protein from Methanocaldococcus jannaschii (strain ATCC 43067 / DSM 2661 / JAL-1 / JCM 10045 / NBRC 100440) (Methanococcus jannaschii).